A 1097-amino-acid polypeptide reads, in one-letter code: MDFLRLYLPGLHQALRGALDSLGTFVSYLLGDAVPTVEREAQAAEELGVVAVGKTGKIVEEEAQEDLEGLRGSQNEGAGRLRGPGDDRRHEVGSSAVEQTWGWGDGSSHGSQAERQDSGAGETAKAARCQEPSAHLEARKKSKAGSGACQDRSGQAQERQESHEQEVNREERLRSWEQEEEEEEVRAREPGMARGAESEWTWHGETEGKAGAVGPKAAGDNREMEQGVREADAGETEEPGAEGAGKGEEVVVVEKACESTRAWGTWGPGAEPEDWGILGREEARTTPGREEARAILDGEEARTISGGEEAETASGGEEAETASGGEEAGTASGGEEAGIASGGEAGTASGGEEAGTASGGEEAGTASGGDEAWTTSGKEEADLLGVRQTEYGAVPGERLLEATGKVWVLEEEGDEEREAEVSPFPKQPQVLGTERTEEAAESQTAGREAVGGQEAGESFEGQVDLRGKEAEMRQDLGIRADRARMEELVQAEEAQEERGSSRDPVAELPSDGEAEGTADLEATPEARPEEELTGEESEAAQTSCGLLGVEWGGLTHSVTKGQGPELMGGAQTPTKQPEEREAGEVELMGVLALSKEEQERSLEAGPRHAGSVKPEASEAFPGAWENRTRKDMERGNTQEDAADGEQREEEETAGGQTLAAEAEGDRESELSEVPEAGGEGLTTQDAGCGTEEGEASVSENQELDGSTGADAGPCPSLGEAYARETEDEEAEADRTSRRGWRLQAVAVGLPDREDAQTGSVAAGIMGGDVVPHISAAGAGEALEGVLGQGWDSKEKEEAAAGEHAGGQEFGLEGSAEEEVTGRGSQVEAFESREGGPWGGRVEAEESAGAEDSCGLDPAGSQTARAEGMGAMVEAGGLLEKWTLLEEEAVGWQEREQREDSEGRCGDYHPEGEAPRLLDAEGLMVTGGRRAEAKETEPESLEHVRGQEEQPTHQAPAEAAPESVGEAETAEAMGSARGGAANSWSEAPLPGSLLDVSVPRSRVHLSRSSSQRRSRPSFRRTPAWEQQEEPPAPNPPEEELSAPEQRPLQLEEPLEPSPLRHDGTPVPARRRPLGHGFGLAHPGMMQELQARLGRPKPQ.

Disordered regions lie at residues 64-249 (QEDL…KGEE), 262-376 (AWGT…WTTS), 410-739 (EEEG…SRRG), 789-866 (GWDS…ARAE), and 889-1097 (VGWQ…PKPQ). Composition is skewed to basic and acidic residues over residues 83-92 (GPGDDRRHEV), 158-177 (ERQESHEQEVNREERLRSWE), and 185-208 (VRAREPGMARGAESEWTWHGETEG). Low complexity predominate over residues 209 to 218 (KAGAVGPKAA). Composition is skewed to basic and acidic residues over residues 219–232 (GDNREMEQGVREAD) and 279–302 (GREEARTTPGREEARAILDGEEAR). The span at 312-330 (TASGGEEAETASGGEEAGT) shows a compositional bias: low complexity. Gly residues predominate over residues 331 to 362 (ASGGEEAGIASGGEAGTASGGEEAGTASGGEE). At Ser-458 the chain carries Phosphoserine. Composition is skewed to basic and acidic residues over residues 463–487 (VDLRGKEAEMRQDLGIRADRARMEE) and 496–505 (EERGSSRDPV). A Phosphoserine modification is found at Ser-510. Position 572 is a phosphothreonine (Thr-572). Ser-594 carries the phosphoserine modification. 2 stretches are compositionally biased toward basic and acidic residues: residues 594-606 (SKEEQERSLEAGP) and 626-637 (NRTRKDMERGNT). Residues 640-652 (DAADGEQREEEET) are compositionally biased toward acidic residues. Basic and acidic residues-rich tracts occupy residues 791-800 (DSKEKEEAAA), 892-918 (QEREQREDSEGRCGDYHPEGEAPRLLD), and 928-950 (RRAEAKETEPESLEHVRGQEEQP). Basic residues predominate over residues 1000–1017 (SRVHLSRSSSQRRSRPSF). Positions 1041-1050 (APEQRPLQLE) are enriched in low complexity.

Homodimer. There are 2 forms in macrophages, the membrane-binding proteins 200 kDa (MBP 200) and 235 kDa (MBP 235), that can be reduced into a single active ligand-binding species with intermediate mobility (MBP 200R). As to expression, expressed in peripheral blood leukocytes &gt; bone marrow = spleen &gt; lymph node, and only faintly visible in appendix and thymus. Expressed in the brain, heart, kidney, liver, lung, pancreas, and placenta. Expressed primarily by reticuloendothelial cells: monocytes, macrophages, and endothelial cells. Expressed in atherosclerotic lesion foam cells.

The protein resides in the cell membrane. Functionally, macrophage receptor that binds to the apolipoprotein B48 (APOB) of dietary triglyceride (TG)-rich lipoproteins (TRL) or to a like domain of APOB in hypertriglyceridemic very low density lipoprotein (HTG-VLDL). Binds and internalizes TRL when out of the context of the macrophage. May provide essential lipids to reticuloendothelial cells. Could also be involved in foam cell formation with elevated TRL and remnant lipoprotein (RLP). Mediates the rapid high-affinity uptake of chylomicrons (CM), HTG-VLDL, and trypsinized (tryp) VLDL devoid of APOE in vitro in macrophages. This Homo sapiens (Human) protein is Apolipoprotein B receptor.